The following is a 514-amino-acid chain: ATP synthase subunit alpha (514 aa).

ATP is bound at residue G170–T177.

This sequence belongs to the ATPase alpha/beta chains family. As to quaternary structure, F-type ATPases have 2 components, CF(1) - the catalytic core - and CF(0) - the membrane proton channel. CF(1) has five subunits: alpha(3), beta(3), gamma(1), delta(1), epsilon(1). CF(0) has three main subunits: a(1), b(2) and c(9-12). The alpha and beta chains form an alternating ring which encloses part of the gamma chain. CF(1) is attached to CF(0) by a central stalk formed by the gamma and epsilon chains, while a peripheral stalk is formed by the delta and b chains.

The protein resides in the cell inner membrane. It carries out the reaction ATP + H2O + 4 H(+)(in) = ADP + phosphate + 5 H(+)(out). Produces ATP from ADP in the presence of a proton gradient across the membrane. The alpha chain is a regulatory subunit. This Acidithiobacillus ferridurans protein is ATP synthase subunit alpha.